The sequence spans 130 residues: Glycoprotein hormone beta-5 (130 aa).

Residues 1–24 (MKLVYLVLGAVALLLLGGPDSVLS) form the signal peptide. 5 cysteine pairs are disulfide-bonded: cysteine 36/cysteine 84, cysteine 50/cysteine 99, cysteine 60/cysteine 115, cysteine 64/cysteine 117, and cysteine 120/cysteine 127. An N-linked (GlcNAc...) asparagine glycan is attached at asparagine 87.

It belongs to the glycoprotein hormones subunit beta family. Heterodimer with GPHA2; this heterodimer interacts with thyroid-stimulating hormone receptor (TSHR), and hence stimulates cAMP production. Post-translationally, N-glycosylated. Expressed in the anterior lobe of pituitary.

It is found in the secreted. Functionally, functions as a heterodimeric glycoprotein hormone with GPHA2 able to bind and activate the thyroid-stimulating hormone receptor (TSHR), leading to increased cAMP production. Plays a central role in controlling thyroid cell metabolism. This chain is Glycoprotein hormone beta-5 (Gphb5), found in Mus musculus (Mouse).